Reading from the N-terminus, the 388-residue chain is MTRSVWLKADDAVGDWEARKRRITAGLEAGVDWVLVDERDVSRVRELGQVNVAAFAGDDVHVMDAEEQPDAEPDAVIVGKEGEGDGTVDLPSDFSGSADLTTLRRAEAPAGAYVRILDQDYESFAETAAVDADYTIVIGDDWQIIPLENLIARIGDETDLIAGVQTAEEAETAFETLELGADAVLLDTDNPDEIRATVEARDATERETLDLQRATVTEIEETGSADRVCVDTASMLEHDEGMLVGSMSRGLFFVHAETADSPYVASRPFRVNAGAVHAYVRTPDGGTKYLAELSSGDEVQVVDTDGNTREAIVGRAKIEKRPMFRIEAELENGDRIETLLQNAETIKVATDEGRRSVTELEAGDELLIYYEDVARHFGEAVEESIIEK.

This sequence belongs to the archaeal-type DHQ synthase family.

It carries out the reaction 2-amino-2,3,7-trideoxy-D-lyxo-hept-6-ulosonate + NAD(+) + H2O = 3-dehydroquinate + NH4(+) + NADH + H(+). Catalyzes the oxidative deamination and cyclization of 2-amino-3,7-dideoxy-D-threo-hept-6-ulosonic acid (ADH) to yield 3-dehydroquinate (DHQ), which is fed into the canonical shikimic pathway of aromatic amino acid biosynthesis. This Natronomonas pharaonis (strain ATCC 35678 / DSM 2160 / CIP 103997 / JCM 8858 / NBRC 14720 / NCIMB 2260 / Gabara) (Halobacterium pharaonis) protein is 3-dehydroquinate synthase.